The primary structure comprises 267 residues: 4-hydroxy-tetrahydrodipicolinate reductase (267 aa).

NAD(+) is bound by residues 9-14 (GAAGRM) and aspartate 35. Residue arginine 36 coordinates NADP(+). NAD(+) contacts are provided by residues 99–101 (GTT) and 123–126 (APNY). Histidine 156 acts as the Proton donor/acceptor in catalysis. Residue histidine 157 participates in (S)-2,3,4,5-tetrahydrodipicolinate binding. The active-site Proton donor is lysine 160. 166–167 (GT) is a (S)-2,3,4,5-tetrahydrodipicolinate binding site.

Belongs to the DapB family.

The protein resides in the cytoplasm. It carries out the reaction (S)-2,3,4,5-tetrahydrodipicolinate + NAD(+) + H2O = (2S,4S)-4-hydroxy-2,3,4,5-tetrahydrodipicolinate + NADH + H(+). The catalysed reaction is (S)-2,3,4,5-tetrahydrodipicolinate + NADP(+) + H2O = (2S,4S)-4-hydroxy-2,3,4,5-tetrahydrodipicolinate + NADPH + H(+). Its pathway is amino-acid biosynthesis; L-lysine biosynthesis via DAP pathway; (S)-tetrahydrodipicolinate from L-aspartate: step 4/4. Functionally, catalyzes the conversion of 4-hydroxy-tetrahydrodipicolinate (HTPA) to tetrahydrodipicolinate. This Alkalilimnicola ehrlichii (strain ATCC BAA-1101 / DSM 17681 / MLHE-1) protein is 4-hydroxy-tetrahydrodipicolinate reductase.